The chain runs to 205 residues: Ribonuclease HII (205 aa).

The RNase H type-2 domain occupies 14–205; it reads SLISGIDEAG…SFRLKQLGEK (192 aa). Residues aspartate 20, glutamate 21, and aspartate 117 each coordinate a divalent metal cation.

Belongs to the RNase HII family. Requires Mn(2+) as cofactor. The cofactor is Mg(2+).

It is found in the cytoplasm. The enzyme catalyses Endonucleolytic cleavage to 5'-phosphomonoester.. Its function is as follows. Endonuclease that specifically degrades the RNA of RNA-DNA hybrids. In Chlorobium phaeobacteroides (strain DSM 266 / SMG 266 / 2430), this protein is Ribonuclease HII.